The chain runs to 1406 residues: DNA-directed RNA polymerase subunit beta' (1406 aa).

4 residues coordinate Zn(2+): cysteine 72, cysteine 74, cysteine 87, and cysteine 90. Aspartate 462, aspartate 464, and aspartate 466 together coordinate Mg(2+). The Zn(2+) site is built by cysteine 816, cysteine 889, cysteine 896, and cysteine 899.

It belongs to the RNA polymerase beta' chain family. As to quaternary structure, the RNAP catalytic core consists of 2 alpha, 1 beta, 1 beta' and 1 omega subunit. When a sigma factor is associated with the core the holoenzyme is formed, which can initiate transcription. It depends on Mg(2+) as a cofactor. Requires Zn(2+) as cofactor.

It catalyses the reaction RNA(n) + a ribonucleoside 5'-triphosphate = RNA(n+1) + diphosphate. Functionally, DNA-dependent RNA polymerase catalyzes the transcription of DNA into RNA using the four ribonucleoside triphosphates as substrates. This is DNA-directed RNA polymerase subunit beta' from Psychrobacter sp. (strain PRwf-1).